A 703-amino-acid chain; its full sequence is WPP domain-interacting tail-anchored protein 1 (703 aa).

Residues 1–12 are compositionally biased toward basic and acidic residues; the sequence is METETEHDRTVS. 2 disordered regions span residues 1 to 27 and 86 to 107; these read METE…SSTK and FVSK…DDDS. A compositionally biased stretch (acidic residues) spans 92–107; the sequence is EDEEEPSSNVDDDDDS. Positions 118–183 form a coiled coil; it reads SSILNSEVKE…MEQVVEMKKQ (66 aa). The interval 189–208 is disordered; sequence RLSSGLDEQGSWSGGQTSVS. Residues 198 to 208 show a composition bias toward polar residues; sequence GSWSGGQTSVS. Coiled coils occupy residues 236–265, 318–461, and 500–604; these read LEKS…MKLY, KRED…RDKG, and STVS…SREN. A helical transmembrane segment spans residues 679–699; it reads FKHILVAILVILISSIAYVIS.

As to quaternary structure, homodimer. Component of Ran complexes at least composed of WIT1 or WIT2, RANGAP1 or RANGAP2, and WIP1 or WIP2 or WIP3. Interacts with WIP2, WPP1/MAF1, WPP2/MAF2, RANGAP1 and RANGAP2. Component of a ternary complex composed of WPP1, HSP70-1 and WIT1. Interacts with KAKU1. Interacts with WIP1. Ubiquitous.

The protein resides in the nucleus envelope. It is found in the nucleus membrane. Functionally, together with WIT2, required for the nuclear envelope docking of RANGAP proteins in root tips. The sequence is that of WPP domain-interacting tail-anchored protein 1 (WIT1) from Arabidopsis thaliana (Mouse-ear cress).